Reading from the N-terminus, the 189-residue chain is MANLRTQKRLAASVVGVGKRKVWLDPNETSEIAQANSRNAIRKLVKNGTIVKKAVTVHSKSRTRAHAQSKREGRHSGYGKRKGTREARLPSQVVWIRRLRVLRRLLAKYRDAGKIDKHLYHVLYKESKGNAFKHKRALVEHIIQAKADAQREKALNEEAEARRLKNRAARDRRAQRVAEKRDALLKEDA.

K21 is covalently cross-linked (Glycyl lysine isopeptide (Lys-Gly) (interchain with G-Cter in ubiquitin)). A phosphoserine mark is found at S30 and S37. Residues K53 and K60 each participate in a glycyl lysine isopeptide (Lys-Gly) (interchain with G-Cter in ubiquitin) cross-link. The interval H58 to R85 is disordered. Residues S59–Q68 show a composition bias toward basic residues. The residue at position 91 (S91) is a Phosphoserine. Glycyl lysine isopeptide (Lys-Gly) (interchain with G-Cter in ubiquitin) cross-links involve residues K146 and K186. The tract at residues L164–A189 is disordered.

The protein belongs to the eukaryotic ribosomal protein eL19 family. As to quaternary structure, component of the large ribosomal subunit (LSU). Mature yeast ribosomes consist of a small (40S) and a large (60S) subunit. The 40S small subunit contains 1 molecule of ribosomal RNA (18S rRNA) and 33 different proteins (encoded by 57 genes). The large 60S subunit contains 3 rRNA molecules (25S, 5.8S and 5S rRNA) and 46 different proteins (encoded by 81 genes). eL19 lies in close proximity to the binding site for eukaryotic initiation factor eIF4G.

The protein resides in the cytoplasm. Its function is as follows. Component of the ribosome, a large ribonucleoprotein complex responsible for the synthesis of proteins in the cell. The small ribosomal subunit (SSU) binds messenger RNAs (mRNAs) and translates the encoded message by selecting cognate aminoacyl-transfer RNA (tRNA) molecules. The large subunit (LSU) contains the ribosomal catalytic site termed the peptidyl transferase center (PTC), which catalyzes the formation of peptide bonds, thereby polymerizing the amino acids delivered by tRNAs into a polypeptide chain. The nascent polypeptides leave the ribosome through a tunnel in the LSU and interact with protein factors that function in enzymatic processing, targeting, and the membrane insertion of nascent chains at the exit of the ribosomal tunnel. eL19 may play a role in the last stages of translation initiation, in particular subunit joining and shedding/releasing factors. This is Large ribosomal subunit protein eL19A from Saccharomyces cerevisiae (strain ATCC 204508 / S288c) (Baker's yeast).